A 141-amino-acid polypeptide reads, in one-letter code: Large ribosomal subunit protein uL16 (141 aa).

This sequence belongs to the universal ribosomal protein uL16 family. As to quaternary structure, part of the 50S ribosomal subunit.

Functionally, binds 23S rRNA and is also seen to make contacts with the A and possibly P site tRNAs. The protein is Large ribosomal subunit protein uL16 of Campylobacter jejuni subsp. jejuni serotype O:6 (strain 81116 / NCTC 11828).